A 188-amino-acid polypeptide reads, in one-letter code: Peroxidase B (188 aa).

This sequence belongs to the peroxidase family. Post-translationally, partially N-glycosylated.

Its subcellular location is the secreted. It carries out the reaction 2 a phenolic donor + H2O2 = 2 a phenolic radical donor + 2 H2O. This is Peroxidase B from Aloe vera (Aloe).